The following is a 663-amino-acid chain: Probable peptidyl-glycine alpha-amidating monooxygenase pamn-1 (663 aa).

Positions 1-21 (MNDRISINLIYLVLTFCCVSA) are cleaved as a signal peptide. The tract at residues 1-300 (MNDRISINLI…YDAKLDNPYP (300 aa)) is peptidylglycine alpha-hydroxylating monooxygenase. Residues His75 and His76 each contribute to the Cu(2+) site. A disulfide bridge links Cys82 with Cys98. His142 contacts Cu(2+). N-linked (GlcNAc...) asparagine glycosylation is present at Asn191. 2 disulfide bridges follow: Cys194–Cys305 and Cys261–Cys283. The Cu(2+) site is built by His210 and His212. The N-linked (GlcNAc...) asparagine glycan is linked to Asn269. Met282 is a binding site for Cu(2+). The segment at 301–663 (QGAICAKDYP…WQFKIRHDQN (363 aa)) is peptidyl-alpha-hydroxyglycine alpha-amidating lyase. Arg376 is a binding site for a protein. An N-linked (GlcNAc...) asparagine glycan is attached at Asn411. NHL repeat units follow at residues 411–454 (NQTK…WKIE), 464–507 (SGEL…LDLN), 511–554 (IRQF…MTTQ), and 626–656 (FGQPHCLRVCPDGGHIFVGDIAEGKARLWQF). Residues Cys478 and Cys497 are joined by a disulfide bond. Residues Tyr496 and Arg543 each coordinate a protein.

It in the C-terminal section; belongs to the peptidyl-alpha-hydroxyglycine alpha-amidating lyase family. In the N-terminal section; belongs to the copper type II ascorbate-dependent monooxygenase family. In terms of assembly, monomer. Requires Zn(2+) as cofactor. Cu(2+) serves as cofactor.

The protein localises to the secreted. The enzyme catalyses a [peptide]-C-terminal glycine + 2 L-ascorbate + O2 = a [peptide]-C-terminal (2S)-2-hydroxyglycine + 2 monodehydro-L-ascorbate radical + H2O. It carries out the reaction a [peptide]-C-terminal (2S)-2-hydroxyglycine = a [peptide]-C-terminal amide + glyoxylate. Its function is as follows. Probable bifunctional enzyme that catalyzes 2 sequential steps in C-terminal alpha-amidation of peptides. The monooxygenase part produces an unstable peptidyl(2-hydroxyglycine) intermediate that is dismutated to glyoxylate and the corresponding desglycine peptide amide by the lyase part. C-terminal amidation of peptides such as neuropeptides is essential for full biological activity. This is Probable peptidyl-glycine alpha-amidating monooxygenase pamn-1 from Caenorhabditis elegans.